The chain runs to 145 residues: Transcription antitermination protein NusB (145 aa).

This sequence belongs to the NusB family.

In terms of biological role, involved in transcription antitermination. Required for transcription of ribosomal RNA (rRNA) genes. Binds specifically to the boxA antiterminator sequence of the ribosomal RNA (rrn) operons. The polypeptide is Transcription antitermination protein NusB (Aromatoleum aromaticum (strain DSM 19018 / LMG 30748 / EbN1) (Azoarcus sp. (strain EbN1))).